We begin with the raw amino-acid sequence, 400 residues long: Subtilisin-like protease 7 (400 aa).

Residues Met-1–Gly-20 form the signal peptide. A propeptide spanning residues Ala-21–Asn-119 is cleaved from the precursor. In terms of domain architecture, Inhibitor I9 spans Lys-36 to Ile-118. Asn-58 carries N-linked (GlcNAc...) asparagine glycosylation. One can recognise a Peptidase S8 domain in the interval Ser-129–Met-400. Active-site charge relay system residues include Asp-161 and His-192. Asn-222 and Asn-252 each carry an N-linked (GlcNAc...) asparagine glycan. Ser-346 functions as the Charge relay system in the catalytic mechanism. An N-linked (GlcNAc...) asparagine glycan is attached at Asn-396.

It belongs to the peptidase S8 family.

It localises to the secreted. Its function is as follows. Secreted subtilisin-like serine protease with keratinolytic activity that contributes to pathogenicity. The chain is Subtilisin-like protease 7 (SUB7) from Arthroderma benhamiae (Trichophyton mentagrophytes).